A 95-amino-acid chain; its full sequence is Large ribosomal subunit protein uL23 (95 aa).

This sequence belongs to the universal ribosomal protein uL23 family. In terms of assembly, part of the 50S ribosomal subunit. Contacts protein L29, and trigger factor when it is bound to the ribosome.

Its function is as follows. One of the early assembly proteins it binds 23S rRNA. One of the proteins that surrounds the polypeptide exit tunnel on the outside of the ribosome. Forms the main docking site for trigger factor binding to the ribosome. The sequence is that of Large ribosomal subunit protein uL23 from Desulfitobacterium hafniense (strain Y51).